A 216-amino-acid chain; its full sequence is Ribonuclease HII (216 aa).

Residues 28–216 (ACIAGIDEAG…GVKEYVRSEE (189 aa)) form the RNase H type-2 domain. A divalent metal cation contacts are provided by aspartate 34, glutamate 35, and aspartate 126.

Belongs to the RNase HII family. Requires Mn(2+) as cofactor. Mg(2+) serves as cofactor.

It localises to the cytoplasm. It carries out the reaction Endonucleolytic cleavage to 5'-phosphomonoester.. Functionally, endonuclease that specifically degrades the RNA of RNA-DNA hybrids. This is Ribonuclease HII from Geotalea uraniireducens (strain Rf4) (Geobacter uraniireducens).